We begin with the raw amino-acid sequence, 396 residues long: MVEADRPGKLFIGGLNLETDEKSLEATFGKYGRISEVLLMKDRETNKSRGFAFITFESPADAKAAVRDMNGKSLDGKAIKVAQATKPAFESGRRGPPLSRSRGRSRGLRGARGGGPRRPPSRGGPADDGGYAGDFDLRPSRAPLPMKRGPPPPRRAGPPPKRAAPSGPARSGSGGGMRGRAPAARGRDGYEGPPRRDPPPPRRDPYLGSREGGYSPRDGYSSRDYSSARDARDFAPSPREYTYRDYGHSSARDECPSRGYGDRDGYGGRDRDYADHPSGGSYRDPFESYGDPRSAAPARGPPPSYGGGGGRYEEYRGCSPDAYGGGRDGYAGGRSERYSGGRDRVGRADRGLPQSVERGCPPPRESYSRSGRKVPRGGGRLGSRSERGGGGGRSRY.

Met-1 is subject to N-acetylmethionine; in Heterogeneous nuclear ribonucleoprotein G; alternate. Val-2 bears the N-acetylvaline; in Heterogeneous nuclear ribonucleoprotein G, N-terminally processed mark. The RRM domain maps to Gly-8–Lys-86. Lys-22 is covalently cross-linked (Glycyl lysine isopeptide (Lys-Gly) (interchain with G-Cter in SUMO2)). Lys-30 carries the N6-acetyllysine modification. Residues Lys-80 and Lys-86 each participate in a glycyl lysine isopeptide (Lys-Gly) (interchain with G-Cter in SUMO2) cross-link. The disordered stretch occupies residues Ala-84–Tyr-396. At Ser-91 the chain carries Phosphoserine. Omega-N-methylarginine occurs at positions 122, 141, 162, and 170. A compositionally biased stretch (pro residues) spans Arg-148–Arg-162. 2 stretches are compositionally biased toward basic and acidic residues: residues Arg-185–Pro-205 and Tyr-241–Asp-275. Residues Gly-186–Pro-236 are necessary for the association to nascent RNAPII transcripts and nuclear localization. Positions Tyr-323–Gly-332 are enriched in gly residues. Residues Arg-334 to Arg-350 show a composition bias toward basic and acidic residues. Phosphoserine is present on residues Ser-335 and Ser-355. Residues Glu-336–Tyr-396 form a necessary for RNA-binding region.

Homomultimer. Found in the supraspliceosome complex. Identified in the spliceosome C complex. Forms a complex with ILF2, ILF3, YLPM1, KHDRBS1, NCOA5 and PPP1CA. Interacts with CLK2, KHDRBS2, KHDRBS3, SAFB/SAFB1, TRA2B and YTHDC1. Interacts with ERAP1; the interaction is RNA-independent. O-glycosylated. Post-translationally, arg-185 is dimethylated, probably to asymmetric dimethylarginine.

The protein resides in the nucleus. In terms of biological role, RNA-binding protein that plays several role in the regulation of pre- and post-transcriptional processes. Implicated in tissue-specific regulation of gene transcription and alternative splicing of several pre-mRNAs. Binds to and stimulates transcription from the tumor suppressor TXNIP gene promoter; may thus be involved in tumor suppression. When associated with SAFB, binds to and stimulates transcription from the SREBF1 promoter. Associates with nascent mRNAs transcribed by RNA polymerase II. Component of the supraspliceosome complex that regulates pre-mRNA alternative splice site selection. Can either activate or suppress exon inclusion; acts additively with TRA2B to promote exon 7 inclusion of the survival motor neuron SMN2. Represses the splicing of MAPT/Tau exon 10. Binds preferentially to single-stranded 5'-CC[A/C]-rich RNA sequence motifs localized in a single-stranded conformation; probably binds RNA as a homodimer. Binds non-specifically to pre-mRNAs. Also plays a role in the cytoplasmic TNFR1 trafficking pathways; promotes both the IL-1-beta-mediated inducible proteolytic cleavage of TNFR1 ectodomains and the release of TNFR1 exosome-like vesicles to the extracellular compartment. This chain is RNA-binding motif protein, X chromosome (RBMX), found in Bos taurus (Bovine).